The sequence spans 415 residues: uncharacterized protein (415 aa).

This is an uncharacterized protein from Methanocaldococcus jannaschii (strain ATCC 43067 / DSM 2661 / JAL-1 / JCM 10045 / NBRC 100440) (Methanococcus jannaschii).